The following is a 261-amino-acid chain: MAELRLPPNSVVKKGKEHKEQEEMLKPRKVKIYRYDPDLDENPTIDSFEIDLSKTGPMVLDALIKIKNEIDSTLTFRRSCREGICGSCSMNIDGTNTLACIKPIEEISGDIKIYPLPHMKVVKDLVPDMSHFYAQYESIEPWLKTDSPTPSNSERLQSIKGREKLDGLYECILCACCSTSCPSYWWNGDKYLGPAILLQAYRWIADSRDDHTGERLEDLEDPSKLYRCHTIMNCTKTCPKGLNPAKAIGKIKSLIAERHGV.

The disordered stretch occupies residues 1–23; the sequence is MAELRLPPNSVVKKGKEHKEQEE. The region spanning 28-119 is the 2Fe-2S ferredoxin-type domain; that stretch reads RKVKIYRYDP…DIKIYPLPHM (92 aa). Positions 80, 85, and 100 each coordinate [2Fe-2S] cluster. Residues 161–191 form the 4Fe-4S ferredoxin-type domain; the sequence is GREKLDGLYECILCACCSTSCPSYWWNGDKY. [4Fe-4S] cluster contacts are provided by Cys171, Cys174, and Cys177. Residue Cys181 coordinates [3Fe-4S] cluster. Trp186 contributes to the a ubiquinone binding site. The [3Fe-4S] cluster site is built by Cys228 and Cys234. Cys238 is a [4Fe-4S] cluster binding site.

The protein belongs to the succinate dehydrogenase/fumarate reductase iron-sulfur protein family. In terms of assembly, part of an enzyme complex containing four subunits: a flavoprotein, an iron-sulfur, cytochrome b-556, and a hydrophobic anchor protein. [2Fe-2S] cluster serves as cofactor. The cofactor is [3Fe-4S] cluster. [4Fe-4S] cluster is required as a cofactor.

The catalysed reaction is a quinone + succinate = fumarate + a quinol. It functions in the pathway carbohydrate metabolism; tricarboxylic acid cycle; fumarate from succinate (bacterial route): step 1/1. This Rickettsia felis (strain ATCC VR-1525 / URRWXCal2) (Rickettsia azadi) protein is Succinate dehydrogenase iron-sulfur subunit (sdhB).